The primary structure comprises 1713 residues: Serine/threonine-protein kinase MRCK beta (1713 aa).

The Protein kinase domain occupies 76-342; sequence FEIIKVIGRG…IEDFKKHAFF (267 aa). Residues 82 to 90 and K105 contribute to the ATP site; that span reads IGRGAFGEV. D200 acts as the Proton acceptor in catalysis. 2 positions are modified to phosphoserine; by autocatalysis: S221 and S233. A Phosphothreonine; by autocatalysis modification is found at T239. Residues 343-413 enclose the AGC-kinase C-terminal domain; that stretch reads EGLNWENIRN…TTESCFSDRG (71 aa). T423 is subject to Phosphothreonine. The stretch at 434–649 forms a coiled coil; that stretch reads LENSLQIEAY…ASKERKLREH (216 aa). At R671 the chain carries Omega-N-methylarginine. Coiled coils occupy residues 681–815 and 878–939; these read QEIS…AHWE and ELQS…FRAD. At S927 the chain carries Phosphoserine. Y954 is subject to Phosphotyrosine. Residues 971–994 show a composition bias toward polar residues; that stretch reads ASDQETQASKMDLSPSVSVATSTE. Positions 971–1022 are disordered; that stretch reads ASDQETQASKMDLSPSVSVATSTEQQEDMARPQQRPSPVPLPSTQALAMAGP. The Phorbol-ester/DAG-type zinc-finger motif lies at 1026 to 1076; that stretch reads AHQFSIKSFPSPTQCSHCTSLMVGLIRQGYACEVCAFSCHVSCKDSAPQVC. In terms of domain architecture, PH spans 1096–1215; sequence GTAYKGYVKV…WVGILEGLQA (120 aa). A CNH domain is found at 1241–1515; it reads IKAVLAAAIV…RPLNSDGSLN (275 aa). Residues 1585 to 1598 form the CRIB domain; it reads ISNPTNFNHVAHMG. A disordered region spans residues 1616–1713; sequence TVQEEKQGPT…EGLDQPSCDA (98 aa). Basic and acidic residues predominate over residues 1666 to 1677; sequence DFDKEPDSDSTK. S1682, S1684, S1688, S1692, and S1695 each carry phosphoserine.

Belongs to the protein kinase superfamily. AGC Ser/Thr protein kinase family. DMPK subfamily. Homodimer and homotetramer via the coiled coil regions. Interacts tightly with GTP-bound but not GDP-bound CDC42. Interacts with TJP1; this interaction requires the presence of catalytically active CDC42. Forms a tripartite complex with MYO18A and LURAP1 with the latter acting as an adapter connecting CDC42BPB and MYO18A. LURAP1 binding results in activation of CDC42BPB by abolition of its negative autoregulation. Interacts with STRIP1, STRN3 and SIKE1. Interacts with CPNE4 (via VWFA domain). Interacts with LURAP1. Interacts (via AGC-kinase C-terminal domain) with FAM89B/LRAP25 (via LRR repeat). Forms a tripartite complex with FAM89B/LRAP25 and LIMK1. It depends on Mg(2+) as a cofactor. Proteolytically cleaved by caspases upon apoptosis induction.

It localises to the cytoplasm. The protein localises to the cell membrane. It is found in the cell junction. The protein resides in the cell projection. Its subcellular location is the lamellipodium. It catalyses the reaction L-seryl-[protein] + ATP = O-phospho-L-seryl-[protein] + ADP + H(+). The catalysed reaction is L-threonyl-[protein] + ATP = O-phospho-L-threonyl-[protein] + ADP + H(+). Its activity is regulated as follows. Maintained in an inactive, closed conformation by an interaction between the kinase domain and the negative autoregulatory C-terminal coiled-coil region. Agonist binding to the phorbol ester binding site disrupts this, releasing the kinase domain to allow N-terminus-mediated dimerization and kinase activation by transautophosphorylation. Inhibited by chelerythrine chloride. Functionally, serine/threonine-protein kinase which is an important downstream effector of CDC42 and plays a role in the regulation of cytoskeleton reorganization and cell migration. Regulates actin cytoskeletal reorganization via phosphorylation of PPP1R12C and MYL9/MLC2. In concert with MYO18A and LURAP1, is involved in modulating lamellar actomyosin retrograde flow that is crucial to cell protrusion and migration. Phosphorylates PPP1R12A. In concert with FAM89B/LRAP25 mediates the targeting of LIMK1 to the lamellipodium resulting in its activation and subsequent phosphorylation of CFL1 which is important for lamellipodial F-actin regulation. This is Serine/threonine-protein kinase MRCK beta from Mus musculus (Mouse).